Here is a 138-residue protein sequence, read N- to C-terminus: Acidic phospholipase A2 Cvv-E6a (138 aa).

The N-terminal stretch at 1-16 (MRTLWIVAVLLLGVEG) is a signal peptide. 7 disulfide bridges follow: cysteine 42/cysteine 131, cysteine 44/cysteine 60, cysteine 59/cysteine 111, cysteine 65/cysteine 138, cysteine 66/cysteine 104, cysteine 73/cysteine 97, and cysteine 91/cysteine 102. Residues tyrosine 43, glycine 45, and glycine 47 each coordinate Ca(2+). Histidine 63 is a catalytic residue. Residue aspartate 64 participates in Ca(2+) binding. Aspartate 105 is a catalytic residue.

This sequence belongs to the phospholipase A2 family. Group II subfamily. D49 sub-subfamily. Ca(2+) serves as cofactor. Expressed by the venom gland.

It is found in the secreted. It carries out the reaction a 1,2-diacyl-sn-glycero-3-phosphocholine + H2O = a 1-acyl-sn-glycero-3-phosphocholine + a fatty acid + H(+). In terms of biological role, snake venom phospholipase A2 (PLA2) that significantly inhibits ADP-induced platelet aggregation in platelet-rich plasma of human, rabbit and guinea pig. PLA2 catalyzes the calcium-dependent hydrolysis of the 2-acyl groups in 3-sn-phosphoglycerides. This Crotalus viridis viridis (Prairie rattlesnake) protein is Acidic phospholipase A2 Cvv-E6a.